The sequence spans 442 residues: tRNA modification GTPase MnmE (442 aa).

Residues R24, E82, and K120 each contribute to the (6S)-5-formyl-5,6,7,8-tetrahydrofolate site. One can recognise a TrmE-type G domain in the interval 217 to 367; the sequence is GLHIVITGEP…LISLIKEKAE (151 aa). GTP-binding positions include 227–232, 246–252, and 271–274; these read NVGKST, SEYAGTT, and DTAG. Residues S231 and T252 each contribute to the Mg(2+) site. A (6S)-5-formyl-5,6,7,8-tetrahydrofolate-binding site is contributed by K442.

This sequence belongs to the TRAFAC class TrmE-Era-EngA-EngB-Septin-like GTPase superfamily. TrmE GTPase family. As to quaternary structure, homodimer. Heterotetramer of two MnmE and two MnmG subunits. The cofactor is K(+).

The protein resides in the cytoplasm. Exhibits a very high intrinsic GTPase hydrolysis rate. Involved in the addition of a carboxymethylaminomethyl (cmnm) group at the wobble position (U34) of certain tRNAs, forming tRNA-cmnm(5)s(2)U34. The protein is tRNA modification GTPase MnmE of Wolbachia sp. subsp. Drosophila simulans (strain wRi).